The primary structure comprises 635 residues: 1-deoxy-D-xylulose-5-phosphate synthase (635 aa).

Thiamine diphosphate is bound by residues histidine 78 and 119 to 121; that span reads GHS. Residue aspartate 151 coordinates Mg(2+). Thiamine diphosphate-binding positions include 152-153, asparagine 180, tyrosine 289, and glutamate 371; that span reads GA. Asparagine 180 contacts Mg(2+).

Belongs to the transketolase family. DXPS subfamily. As to quaternary structure, homodimer. Mg(2+) serves as cofactor. It depends on thiamine diphosphate as a cofactor.

It carries out the reaction D-glyceraldehyde 3-phosphate + pyruvate + H(+) = 1-deoxy-D-xylulose 5-phosphate + CO2. It participates in metabolic intermediate biosynthesis; 1-deoxy-D-xylulose 5-phosphate biosynthesis; 1-deoxy-D-xylulose 5-phosphate from D-glyceraldehyde 3-phosphate and pyruvate: step 1/1. In terms of biological role, catalyzes the acyloin condensation reaction between C atoms 2 and 3 of pyruvate and glyceraldehyde 3-phosphate to yield 1-deoxy-D-xylulose-5-phosphate (DXP). In Bartonella tribocorum (strain CIP 105476 / IBS 506), this protein is 1-deoxy-D-xylulose-5-phosphate synthase.